Consider the following 341-residue polypeptide: Paired box protein Pax-9 (341 aa).

Residues Ala-4 to Lys-130 constitute a DNA-binding region (paired). Residues Glu-7 to Thr-63 are PAI subdomain. The interval Thr-82 to Lys-130 is RED subdomain. The interaction with KDM5B stretch occupies residues Ala-168–Pro-189.

As to quaternary structure, interacts with KDM5B.

The protein localises to the nucleus. In terms of biological role, transcription factor required for normal development of thymus, parathyroid glands, ultimobranchial bodies, teeth, skeletal elements of skull and larynx as well as distal limbs. This is Paired box protein Pax-9 (PAX9) from Callimico goeldii (Goeldi's marmoset).